Reading from the N-terminus, the 405-residue chain is MEGESTSALLSGFVFGALAFQHLSTDSDTEGFLLGDVKGEAKNSITDSQMDDVEVVYTIDIQKHIPCYQLFSFYNSAGELNEPALKKILSGRKKSVIGWYKFRRNTDQIMTFRERLLHKNLQSHLSNQGLVFLLLTSSVMTESCSTYRLEHALHRPQEGLFQKVPLVVTNLGMAEQQGYRTVSGSCASSGFVRAVKQHRSEFFYEDGSLQEVHKINEMYATLQEELKKMCSDVEVSERSVEKLLTEVSQLKEEINRKKQHKISSGGNKDQLEEPKENVLLCQALRTFFPSSDLQTCIVSFKGRISKNCCKIDHNINIMDKLTLMVEERDFTEAETKLVTKRKVRVTTTGPKSLKKLRSLQLDQELHQDEEDCNQETKLALSSAETDEEALENPKDTNEYSYSPTF.

Positions 7 to 153 constitute an MPN domain; it reads SALLSGFVFG…CSTYRLEHAL (147 aa). Residues 208 to 262 are a coiled coil; the sequence is SLQEVHKINEMYATLQEELKKMCSDVEVSERSVEKLLTEVSQLKEEINRKKQHKI. A disordered region spans residues 365-405; it reads LHQDEEDCNQETKLALSSAETDEEALENPKDTNEYSYSPTF. A Phosphoserine modification is found at Ser-402. A pSXXF motif motif is present at residues 402–405; the sequence is SPTF.

It belongs to the FAM175 family. Abraxas subfamily. As to quaternary structure, component of the BRCA1-A complex. Component of the BRISC complex. Homodimer. Interacts directly (when phosphorylated at Ser-402) with BRCA1. The phosphorylated homodimer can interact directly with two BRCA1 chains, giving rise to a heterotetramer. In terms of processing, phosphorylation of Ser-402 of the pSXXF motif by ATM or ATR constitutes a specific recognition motif for the BRCT domain of BRCA1.

It is found in the nucleus. Functionally, involved in DNA damage response and double-strand break (DSB) repair. Component of the BRCA1-A complex, acting as a central scaffold protein that assembles the various components of the complex and mediates the recruitment of BRCA1. The BRCA1-A complex specifically recognizes 'Lys-63'-linked ubiquitinated histones H2A and H2AX at DNA lesion sites, leading to target the BRCA1-BARD1 heterodimer to sites of DNA damage at DSBs. This complex also possesses deubiquitinase activity that specifically removes 'Lys-63'-linked ubiquitin on histones H2A and H2AX. This is BRCA1-A complex subunit Abraxas 1 from Gallus gallus (Chicken).